A 124-amino-acid polypeptide reads, in one-letter code: Protein RibT (124 aa).

Residues 3 to 124 form the N-acetyltransferase domain; the sequence is IRYKKSFEKI…QQDQDISYNN (122 aa).

Involved in riboflavin biosynthesis. The sequence is that of Protein RibT (ribT) from Bacillus subtilis (strain 168).